Consider the following 297-residue polypeptide: Nicotinate-nucleotide pyrophosphorylase [carboxylating] (297 aa).

The segment at 8–12 is important for hexamer formation; the sequence is LLLPP. Quinolinate contacts are provided by residues Arg-102, 138–139, 160–161, Lys-171, Glu-201, Asp-222, 248–250, and Gly-270; these read RK, HR, and SGG.

This sequence belongs to the NadC/ModD family. Hexamer formed by 3 homodimers.

The catalysed reaction is nicotinate beta-D-ribonucleotide + CO2 + diphosphate = quinolinate + 5-phospho-alpha-D-ribose 1-diphosphate + 2 H(+). Its pathway is cofactor biosynthesis; NAD(+) biosynthesis; nicotinate D-ribonucleotide from quinolinate: step 1/1. With respect to regulation, activity toward QA is slightly repressed by phosphoribosylpyrophosphate (PRPP) in both a competitive and a non-competitive manner. Competitively inhibited by phthalic acid (PHT). In terms of biological role, involved in the catabolism of quinolinic acid (QA). The sequence is that of Nicotinate-nucleotide pyrophosphorylase [carboxylating] (QPRT) from Homo sapiens (Human).